A 120-amino-acid chain; its full sequence is Host cell factor C1 regulator 1 (120 aa).

Residues 1–30 form a disordered region; sequence MILQQPLERGPPSRDPRATTGVTRGLNASL. A compositionally biased stretch (polar residues) spans 20–30; sequence TGVTRGLNASL. The interaction with HCFC1 stretch occupies residues 58–61; it reads DHPY. Residues 92-101 carry the Nuclear export signal motif; the sequence is IPEALRLLRL.

As to quaternary structure, interacts with HCFC1.

It is found in the cytoplasm. The protein resides in the nucleus. Functionally, regulates HCFC1 activity by modulating its subcellular localization. Overexpression of HCFC1R1 leads to accumulation of HCFC1 in the cytoplasm. HCFC1R1-mediated export may provide the pool of cytoplasmic HCFC1 required for import of virion-derived VP16 into the nucleus. This is Host cell factor C1 regulator 1 (Hcfc1r1) from Mus musculus (Mouse).